The chain runs to 393 residues: Riboflavin biosynthesis protein RibBA (393 aa).

The tract at residues 1-200 (MQFDNIDSAL…IDDLIEYRKK (200 aa)) is DHBP synthase. D-ribulose 5-phosphate-binding positions include 27 to 28 (RE), Asp-32, 139 to 143 (RNGHT), and Glu-163. Glu-28 contributes to the Mg(2+) binding site. His-142 is a Mg(2+) binding site. The tract at residues 201–393 (LEPEIEFKAK…TKKIKMGHLI (193 aa)) is GTP cyclohydrolase II. A GTP-binding site is contributed by 249 to 253 (RLHSA). Zn(2+) is bound by residues Cys-254, Cys-265, and Cys-267. GTP-binding positions include Gln-270, 291–293 (EGR), and Thr-313. Catalysis depends on Asp-325, which acts as the Proton acceptor; for GTP cyclohydrolase activity. Catalysis depends on Arg-327, which acts as the Nucleophile; for GTP cyclohydrolase activity. GTP is bound by residues Ser-348 and Lys-353.

In the N-terminal section; belongs to the DHBP synthase family. The protein in the C-terminal section; belongs to the GTP cyclohydrolase II family. It depends on Mg(2+) as a cofactor. Requires Mn(2+) as cofactor. The cofactor is Zn(2+).

The enzyme catalyses D-ribulose 5-phosphate = (2S)-2-hydroxy-3-oxobutyl phosphate + formate + H(+). It catalyses the reaction GTP + 4 H2O = 2,5-diamino-6-hydroxy-4-(5-phosphoribosylamino)-pyrimidine + formate + 2 phosphate + 3 H(+). The protein operates within cofactor biosynthesis; riboflavin biosynthesis; 2-hydroxy-3-oxobutyl phosphate from D-ribulose 5-phosphate: step 1/1. It participates in cofactor biosynthesis; riboflavin biosynthesis; 5-amino-6-(D-ribitylamino)uracil from GTP: step 1/4. Catalyzes the conversion of D-ribulose 5-phosphate to formate and 3,4-dihydroxy-2-butanone 4-phosphate. Its function is as follows. Catalyzes the conversion of GTP to 2,5-diamino-6-ribosylamino-4(3H)-pyrimidinone 5'-phosphate (DARP), formate and pyrophosphate. The polypeptide is Riboflavin biosynthesis protein RibBA (Staphylococcus aureus (strain MSSA476)).